Consider the following 420-residue polypeptide: Histidine--tRNA ligase (420 aa).

Belongs to the class-II aminoacyl-tRNA synthetase family. Homodimer.

It is found in the cytoplasm. The enzyme catalyses tRNA(His) + L-histidine + ATP = L-histidyl-tRNA(His) + AMP + diphosphate + H(+). The chain is Histidine--tRNA ligase from Staphylococcus saprophyticus subsp. saprophyticus (strain ATCC 15305 / DSM 20229 / NCIMB 8711 / NCTC 7292 / S-41).